A 240-amino-acid chain; its full sequence is Lipoprotein-releasing system ATP-binding protein LolD (240 aa).

Positions 15-240 constitute an ABC transporter domain; that stretch reads IRAESLGKTY…GLRELTSAEV (226 aa). Residue 51–58 participates in ATP binding; that stretch reads GASGAGKS.

It belongs to the ABC transporter superfamily. Lipoprotein translocase (TC 3.A.1.125) family. The complex is composed of two ATP-binding proteins (LolD) and two transmembrane proteins (LolC and LolE).

The protein resides in the cell inner membrane. Functionally, part of the ABC transporter complex LolCDE involved in the translocation of mature outer membrane-directed lipoproteins, from the inner membrane to the periplasmic chaperone, LolA. Responsible for the formation of the LolA-lipoprotein complex in an ATP-dependent manner. The polypeptide is Lipoprotein-releasing system ATP-binding protein LolD (Xylella fastidiosa (strain Temecula1 / ATCC 700964)).